A 545-amino-acid polypeptide reads, in one-letter code: O-phosphoserine--tRNA(Cys) ligase (545 aa).

Substrate contacts are provided by residues 189 to 191, 234 to 236, 276 to 277, and Asn328; these read HMT, SAS, and YY.

The protein belongs to the class-II aminoacyl-tRNA synthetase family. O-phosphoseryl-tRNA(Cys) synthetase subfamily. In terms of assembly, homotetramer. Interacts with SepCysS.

The enzyme catalyses tRNA(Cys) + O-phospho-L-serine + ATP = O-phospho-L-seryl-tRNA(Cys) + AMP + diphosphate. Functionally, catalyzes the attachment of O-phosphoserine (Sep) to tRNA(Cys). The sequence is that of O-phosphoserine--tRNA(Cys) ligase from Methanothrix thermoacetophila (strain DSM 6194 / JCM 14653 / NBRC 101360 / PT) (Methanosaeta thermophila).